A 513-amino-acid chain; its full sequence is V-type proton ATPase subunit B, kidney isoform (513 aa).

Residue R394 coordinates ATP. The PDZ-binding signature appears at 510-513 (DTAL).

Belongs to the ATPase alpha/beta chains family. As to quaternary structure, V-ATPase is a heteromultimeric enzyme made up of two complexes: the ATP-hydrolytic V1 complex and the proton translocation V0 complex. The V1 complex consists of three catalytic AB heterodimers that form a heterohexamer, three peripheral stalks each consisting of EG heterodimers, one central rotor including subunits D and F, and the regulatory subunits C and H. The proton translocation complex V0 consists of the proton transport subunit a, a ring of proteolipid subunits c9c'', rotary subunit d, subunits e and f, and the accessory subunits ATP6AP1/Ac45 and ATP6AP2/PRR. Forms a complex with NHERF1 and SCL4A7. In terms of tissue distribution, kidney cortex and medulla.

It localises to the apical cell membrane. The protein resides in the basolateral cell membrane. Its function is as follows. Non-catalytic subunit of the V1 complex of vacuolar(H+)-ATPase (V-ATPase), a multisubunit enzyme composed of a peripheral complex (V1) that hydrolyzes ATP and a membrane integral complex (V0) that translocates protons. V-ATPase is responsible for acidifying and maintaining the pH of intracellular compartments and in some cell types, is targeted to the plasma membrane, where it is responsible for acidifying the extracellular environment. Essential for the proper assembly and activity of V-ATPase. In renal intercalated cells, mediates secretion of protons (H+) into the urine thereby ensuring correct urinary acidification. Required for optimal olfactory function by mediating the acidification of the nasal olfactory epithelium. This Bos taurus (Bovine) protein is V-type proton ATPase subunit B, kidney isoform (ATP6V1B1).